The primary structure comprises 530 residues: Developmental and secondary metabolism regulator VEL1 (530 aa).

The Velvet domain maps to 26 to 220; sequence NRSLWYQMTV…ADQGCQVRIR (195 aa). The Nuclear localization signal signature appears at 40–45; the sequence is ERARAC. The segment at 206–516 is disordered; that stretch reads LSKTVADQGC…HDQGWYSRAD (311 aa). The span at 244 to 253 shows a compositional bias: basic and acidic residues; it reads FERREEDFGR. Residues 295 to 305 are compositionally biased toward pro residues; it reads YPPPPPPPSYE. Over residues 347–356 the composition is skewed to polar residues; it reads YAPTAQSPYS. Residues 380–389 show a composition bias toward basic and acidic residues; that stretch reads VKHDLYDRRQ. Positions 390 to 404 are enriched in low complexity; sequence STSSYVPPSPSVYST. A compositionally biased stretch (pro residues) spans 415 to 426; the sequence is SYPPTPVAAPRP. The tract at residues 429–460 is PEST; that stretch reads MHSQTSLPALKIDQLVSPVSPLPPIEPQTGPA. Over residues 478–490 the composition is skewed to polar residues; the sequence is FAQSTRPLHNGQR.

The protein belongs to the velvet family. VeA subfamily. As to quaternary structure, component of the heterotrimeric velvet complex composed of LAE1, VEL1 and VEL2; VEL1 acting as a bridging protein between LAE1 and VEL2. Interacts with LAE1.

Its subcellular location is the nucleus. It localises to the cytoplasm. Functionally, component of the velvet transcription factor complex that controls sexual/asexual developmental ratio in response to light, promoting sexual development in the darkness while stimulating asexual sporulation under illumination. The velvet complex hat acts as a global regulator for secondary metabolite gene expression. Controls positively the expression of the gibberellins, fumonisins and fusarin C gene clusters. Controls the expression of the fusaric acid gene cluster. Controls negatively the expression of the bikaverin gene cluster. Regulates the expression of laeA. Plays a crucial role in virulence. This Gibberella fujikuroi (strain CBS 195.34 / IMI 58289 / NRRL A-6831) (Bakanae and foot rot disease fungus) protein is Developmental and secondary metabolism regulator VEL1.